The sequence spans 236 residues: 2-C-methyl-D-erythritol 4-phosphate cytidylyltransferase (236 aa).

Belongs to the IspD/TarI cytidylyltransferase family. IspD subfamily. As to quaternary structure, homodimer.

The enzyme catalyses 2-C-methyl-D-erythritol 4-phosphate + CTP + H(+) = 4-CDP-2-C-methyl-D-erythritol + diphosphate. It functions in the pathway isoprenoid biosynthesis; isopentenyl diphosphate biosynthesis via DXP pathway; isopentenyl diphosphate from 1-deoxy-D-xylulose 5-phosphate: step 2/6. Functionally, catalyzes the formation of 4-diphosphocytidyl-2-C-methyl-D-erythritol from CTP and 2-C-methyl-D-erythritol 4-phosphate (MEP). The protein is 2-C-methyl-D-erythritol 4-phosphate cytidylyltransferase of Salmonella paratyphi A (strain ATCC 9150 / SARB42).